Consider the following 368-residue polypeptide: Peptide chain release factor 2 (368 aa).

Q245 carries the post-translational modification N5-methylglutamine.

Belongs to the prokaryotic/mitochondrial release factor family. In terms of processing, methylated by PrmC. Methylation increases the termination efficiency of RF2.

Its subcellular location is the cytoplasm. In terms of biological role, peptide chain release factor 2 directs the termination of translation in response to the peptide chain termination codons UGA and UAA. This chain is Peptide chain release factor 2 (prfB), found in Treponema pallidum (strain Nichols).